The chain runs to 170 residues: Ureidoglycolate lyase (170 aa).

It belongs to the ureidoglycolate lyase family. In terms of assembly, homodimer. The cofactor is Ni(2+).

It carries out the reaction (S)-ureidoglycolate = urea + glyoxylate. It participates in nitrogen metabolism; (S)-allantoin degradation. Catalyzes the catabolism of the allantoin degradation intermediate (S)-ureidoglycolate, generating urea and glyoxylate. Involved in the utilization of allantoin as nitrogen source. The sequence is that of Ureidoglycolate lyase from Burkholderia mallei (strain NCTC 10247).